We begin with the raw amino-acid sequence, 25 residues long: Caerin-2.4 (25 aa).

Expressed by the skin parotoid and/or rostral glands.

It localises to the secreted. In terms of biological role, antibacterial peptide, that adopts an alpha helical conformation which can disrupt bacterial membranes. Each caerin displays a different antimicrobial specificity. The sequence is that of Caerin-2.4 from Ranoidea caerulea (Green tree frog).